Reading from the N-terminus, the 199-residue chain is Probable thymidylate kinase (199 aa).

Position 9-16 (9-16 (GIDGCGKT)) interacts with ATP.

It belongs to the thymidylate kinase family.

It carries out the reaction dTMP + ATP = dTDP + ADP. The chain is Probable thymidylate kinase from Methanococcus maripaludis (strain C7 / ATCC BAA-1331).